Consider the following 369-residue polypeptide: Probable L-tyrosine/L-aspartate decarboxylase (369 aa).

Position 224 is an N6-(pyridoxal phosphate)lysine (K224).

It belongs to the group II decarboxylase family. MfnA subfamily. Requires pyridoxal 5'-phosphate as cofactor.

It carries out the reaction L-tyrosine + H(+) = tyramine + CO2. It catalyses the reaction L-aspartate + H(+) = beta-alanine + CO2. The protein operates within cofactor biosynthesis; methanofuran biosynthesis. Its pathway is cofactor biosynthesis; coenzyme A biosynthesis. Its function is as follows. Catalyzes the decarboxylation of L-tyrosine to produce tyramine for methanofuran biosynthesis. Can also catalyze the decarboxylation of L-aspartate to produce beta-alanine for coenzyme A (CoA) biosynthesis. In Methanospirillum hungatei JF-1 (strain ATCC 27890 / DSM 864 / NBRC 100397 / JF-1), this protein is Probable L-tyrosine/L-aspartate decarboxylase.